A 202-amino-acid polypeptide reads, in one-letter code: Holliday junction resolvase RecU (202 aa).

Positions 85, 87, 100, and 119 each coordinate Mg(2+).

The protein belongs to the RecU family. Requires Mg(2+) as cofactor.

The protein resides in the cytoplasm. The catalysed reaction is Endonucleolytic cleavage at a junction such as a reciprocal single-stranded crossover between two homologous DNA duplexes (Holliday junction).. Endonuclease that resolves Holliday junction intermediates in genetic recombination. Cleaves mobile four-strand junctions by introducing symmetrical nicks in paired strands. Promotes annealing of linear ssDNA with homologous dsDNA. Required for DNA repair, homologous recombination and chromosome segregation. The chain is Holliday junction resolvase RecU from Streptococcus equi subsp. equi (strain 4047).